A 171-amino-acid polypeptide reads, in one-letter code: 3-hydroxydecanoyl-[acyl-carrier-protein] dehydratase (171 aa).

The active site involves histidine 70.

This sequence belongs to the thioester dehydratase family. FabA subfamily. In terms of assembly, homodimer.

It localises to the cytoplasm. It carries out the reaction a (3R)-hydroxyacyl-[ACP] = a (2E)-enoyl-[ACP] + H2O. The catalysed reaction is (3R)-hydroxydecanoyl-[ACP] = (2E)-decenoyl-[ACP] + H2O. It catalyses the reaction (2E)-decenoyl-[ACP] = (3Z)-decenoyl-[ACP]. Its pathway is lipid metabolism; fatty acid biosynthesis. Its function is as follows. Necessary for the introduction of cis unsaturation into fatty acids. Catalyzes the dehydration of (3R)-3-hydroxydecanoyl-ACP to E-(2)-decenoyl-ACP and then its isomerization to Z-(3)-decenoyl-ACP. Can catalyze the dehydratase reaction for beta-hydroxyacyl-ACPs with saturated chain lengths up to 16:0, being most active on intermediate chain length. The protein is 3-hydroxydecanoyl-[acyl-carrier-protein] dehydratase of Ectopseudomonas mendocina (strain ymp) (Pseudomonas mendocina).